A 224-amino-acid chain; its full sequence is Probable GTP-binding protein EngB (224 aa).

Positions 31–204 (VGVEIAFAGR…LGILDQWCKP (174 aa)) constitute an EngB-type G domain. GTP is bound by residues 39-46 (GRSNAGKS), 65-69 (GRTQL), 83-86 (DLPG), 150-153 (TKAD), and 183-185 (FSS). Mg(2+) contacts are provided by S46 and T67.

Belongs to the TRAFAC class TrmE-Era-EngA-EngB-Septin-like GTPase superfamily. EngB GTPase family. Mg(2+) serves as cofactor.

In terms of biological role, necessary for normal cell division and for the maintenance of normal septation. The chain is Probable GTP-binding protein EngB from Shewanella piezotolerans (strain WP3 / JCM 13877).